The sequence spans 1413 residues: DNA-directed RNA polymerase subunit beta' (1413 aa).

Zn(2+) contacts are provided by cysteine 70, cysteine 72, cysteine 85, and cysteine 88. Aspartate 460, aspartate 462, and aspartate 464 together coordinate Mg(2+). The Zn(2+) site is built by cysteine 819, cysteine 893, cysteine 900, and cysteine 903. Residues 1392-1413 are disordered; sequence EEAFDFGTPSAPAEEPQHPAAE.

This sequence belongs to the RNA polymerase beta' chain family. As to quaternary structure, the RNAP catalytic core consists of 2 alpha, 1 beta, 1 beta' and 1 omega subunit. When a sigma factor is associated with the core the holoenzyme is formed, which can initiate transcription. Mg(2+) serves as cofactor. The cofactor is Zn(2+).

It carries out the reaction RNA(n) + a ribonucleoside 5'-triphosphate = RNA(n+1) + diphosphate. Its function is as follows. DNA-dependent RNA polymerase catalyzes the transcription of DNA into RNA using the four ribonucleoside triphosphates as substrates. This Burkholderia cenocepacia (strain ATCC BAA-245 / DSM 16553 / LMG 16656 / NCTC 13227 / J2315 / CF5610) (Burkholderia cepacia (strain J2315)) protein is DNA-directed RNA polymerase subunit beta'.